The primary structure comprises 516 residues: Glutamyl-tRNA(Gln) amidotransferase subunit B, mitochondrial (516 aa).

Belongs to the GatB/GatE family. GatB subfamily. As to quaternary structure, subunit of the heterotrimeric GatCAB amidotransferase (AdT) complex, composed of A, B and C subunits.

It localises to the mitochondrion. The catalysed reaction is L-glutamyl-tRNA(Gln) + L-glutamine + ATP + H2O = L-glutaminyl-tRNA(Gln) + L-glutamate + ADP + phosphate + H(+). In terms of biological role, allows the formation of correctly charged Gln-tRNA(Gln) through the transamidation of misacylated Glu-tRNA(Gln) in the mitochondria. The reaction takes place in the presence of glutamine and ATP through an activated gamma-phospho-Glu-tRNA(Gln). The protein is Glutamyl-tRNA(Gln) amidotransferase subunit B, mitochondrial of Drosophila melanogaster (Fruit fly).